The chain runs to 252 residues: 3-dehydroquinate dehydratase (252 aa).

3-dehydroquinate is bound by residues Ser-21, Glu-46–Arg-48, and Arg-82. The active-site Proton donor/acceptor is His-143. Residue Lys-170 is the Schiff-base intermediate with substrate of the active site. The 3-dehydroquinate site is built by Arg-213, Ser-232, and Gln-236.

It belongs to the type-I 3-dehydroquinase family. In terms of assembly, homodimer.

The catalysed reaction is 3-dehydroquinate = 3-dehydroshikimate + H2O. It participates in metabolic intermediate biosynthesis; chorismate biosynthesis; chorismate from D-erythrose 4-phosphate and phosphoenolpyruvate: step 3/7. Involved in the third step of the chorismate pathway, which leads to the biosynthesis of aromatic amino acids. Catalyzes the cis-dehydration of 3-dehydroquinate (DHQ) and introduces the first double bond of the aromatic ring to yield 3-dehydroshikimate. The polypeptide is 3-dehydroquinate dehydratase (Escherichia coli O139:H28 (strain E24377A / ETEC)).